Reading from the N-terminus, the 377-residue chain is Nitric oxide reductase FlRd-NAD(+) reductase (377 aa).

Belongs to the FAD-dependent oxidoreductase family. It depends on FAD as a cofactor.

Its subcellular location is the cytoplasm. The catalysed reaction is 2 reduced [nitric oxide reductase rubredoxin domain] + NAD(+) + H(+) = 2 oxidized [nitric oxide reductase rubredoxin domain] + NADH. It participates in nitrogen metabolism; nitric oxide reduction. One of at least two accessory proteins for anaerobic nitric oxide (NO) reductase. Reduces the rubredoxin moiety of NO reductase. This is Nitric oxide reductase FlRd-NAD(+) reductase from Salmonella gallinarum (strain 287/91 / NCTC 13346).